The chain runs to 118 residues: UPF0295 protein BCG9842_B4782 (118 aa).

Helical transmembrane passes span 12 to 32 (IRTF…LGVF) and 43 to 63 (FMMV…WIGM).

This sequence belongs to the UPF0295 family.

The protein localises to the cell membrane. The polypeptide is UPF0295 protein BCG9842_B4782 (Bacillus cereus (strain G9842)).